The chain runs to 133 residues: Cytochrome c' (133 aa).

Residues Arg12, Thr72, Cys122, Cys125, and His126 each contribute to the heme c site.

Post-translationally, binds 1 heme c group covalently per subunit.

Its function is as follows. Cytochrome c' is the most widely occurring bacterial c-type cytochrome. Cytochromes c' are high-spin proteins and the heme has no sixth ligand. Their exact function is not known. The sequence is that of Cytochrome c' from Rhodocyclus tenuis (Rhodospirillum tenue).